A 526-amino-acid chain; its full sequence is Probable Xaa-Pro aminopeptidase MGG_05684 (526 aa).

Mn(2+)-binding residues include aspartate 285, aspartate 296, glutamate 447, and glutamate 488.

The protein belongs to the peptidase M24B family. It depends on Mn(2+) as a cofactor.

The catalysed reaction is Release of any N-terminal amino acid, including proline, that is linked to proline, even from a dipeptide or tripeptide.. In terms of biological role, catalyzes the removal of a penultimate prolyl residue from the N-termini of peptides. This Pyricularia oryzae (strain 70-15 / ATCC MYA-4617 / FGSC 8958) (Rice blast fungus) protein is Probable Xaa-Pro aminopeptidase MGG_05684.